The following is a 613-amino-acid chain: Zinc metalloproteinase-disintegrin-like EoVMP2 (613 aa).

A signal peptide spans Met1 to Ser20. The propeptide occupies Ile21–Glu194. At Gln195 the chain carries Pyrrolidone carboxylic acid. In terms of domain architecture, Peptidase M12B spans Arg201–Pro397. Glu204 contacts Ca(2+). N-linked (GlcNAc...) asparagine glycosylation occurs at Asn219. Asp288 is a binding site for Ca(2+). 3 disulfide bridges follow: Cys312-Cys392, Cys352-Cys376, and Cys354-Cys359. Residue His337 participates in Zn(2+) binding. The active site involves Glu338. Positions 341 and 347 each coordinate Zn(2+). Asn375 carries an N-linked (GlcNAc...) asparagine glycan. Positions 392, 395, 407, 410, 412, 414, 417, and 420 each coordinate Ca(2+). The Disintegrin domain maps to Pro405–Asn491. Disulfide bonds link Cys408–Cys437, Cys419–Cys432, Cys421–Cys427, Cys431–Cys454, Cys445–Cys451, Cys450–Cys476, Cys463–Cys483, Cys470–Cys502, Cys495–Cys507, Cys514–Cys564, Cys529–Cys575, Cys542–Cys552, Cys559–Cys601, and Cys595–Cys606. A D/ECD-tripeptide motif is present at residues Asp469–Asp471.

The protein belongs to the venom metalloproteinase (M12B) family. P-III subfamily. P-IIIa sub-subfamily. In terms of assembly, monomer. Requires Zn(2+) as cofactor. In terms of tissue distribution, expressed by the venom gland.

The protein resides in the secreted. Its function is as follows. Snake venom zinc metalloprotease that possesses high hemorrhagic activity. It inhibits collagen-induced platelet aggregation and activates prothrombin (F2). In Echis ocellatus (Ocellated saw-scaled viper), this protein is Zinc metalloproteinase-disintegrin-like EoVMP2 (Svmp3-Eoc22).